Reading from the N-terminus, the 49-residue chain is Large ribosomal subunit protein bL32 (49 aa).

The protein belongs to the bacterial ribosomal protein bL32 family.

This Nautilia profundicola (strain ATCC BAA-1463 / DSM 18972 / AmH) protein is Large ribosomal subunit protein bL32.